The following is a 124-amino-acid chain: Ribonuclease pancreatic (124 aa).

Residues 1-13 (KESAAAKFERQHM) show a composition bias toward basic and acidic residues. The interval 1 to 24 (KESAAAKFERQHMDPSTSSASSSN) is disordered. K7 and R10 together coordinate substrate. H12 (proton acceptor) is an active-site residue. 4 disulfide bridges follow: C26-C84, C40-C95, C58-C110, and C65-C72. Residues 41-45 (KPVNT), K66, and R85 contribute to the substrate site. Residue H119 is the Proton donor of the active site.

The protein belongs to the pancreatic ribonuclease family. As to quaternary structure, monomer. Interacts with and forms tight 1:1 complexes with RNH1. Dimerization of two such complexes may occur. Interaction with RNH1 inhibits this protein. Pancreas.

It is found in the secreted. The enzyme catalyses an [RNA] containing cytidine + H2O = an [RNA]-3'-cytidine-3'-phosphate + a 5'-hydroxy-ribonucleotide-3'-[RNA].. The catalysed reaction is an [RNA] containing uridine + H2O = an [RNA]-3'-uridine-3'-phosphate + a 5'-hydroxy-ribonucleotide-3'-[RNA].. Functionally, endonuclease that catalyzes the cleavage of RNA on the 3' side of pyrimidine nucleotides. Acts on single-stranded and double-stranded RNA. This Cervus elaphus (Red deer) protein is Ribonuclease pancreatic (RNASE1).